The primary structure comprises 429 residues: Ubiquinone hydroxylase UbiL (429 aa).

Residues 1 to 22 (MSEPLLRGLAAGDPPSATGPVT) form a disordered region.

The protein belongs to the UbiH/COQ6 family. The cofactor is FAD.

The enzyme catalyses a 2-(all-trans-polyprenyl)phenol + NADPH + O2 + H(+) = a 3-(all-trans-polyprenyl)benzene-1,2-diol + NADP(+) + H2O. It functions in the pathway cofactor biosynthesis; ubiquinone biosynthesis. Its function is as follows. Catalyzes the hydroxylation of two positions of the aromatic ring during ubiquinone biosynthesis. The sequence is that of Ubiquinone hydroxylase UbiL from Rhodospirillum rubrum (strain ATCC 11170 / ATH 1.1.1 / DSM 467 / LMG 4362 / NCIMB 8255 / S1).